Here is a 280-residue protein sequence, read N- to C-terminus: Energy-coupling factor transporter ATP-binding protein EcfA1 (280 aa).

The ABC transporter domain maps to 6-241 (LRTENISFQY…SHMLQEIGLD (236 aa)). 40–47 (GQNGSGKS) contributes to the ATP binding site.

It belongs to the ABC transporter superfamily. Energy-coupling factor EcfA family. Forms a stable energy-coupling factor (ECF) transporter complex composed of 2 membrane-embedded substrate-binding proteins (S component), 2 ATP-binding proteins (A component) and 2 transmembrane proteins (T component).

The protein localises to the cell membrane. Its function is as follows. ATP-binding (A) component of a common energy-coupling factor (ECF) ABC-transporter complex. Unlike classic ABC transporters this ECF transporter provides the energy necessary to transport a number of different substrates. This chain is Energy-coupling factor transporter ATP-binding protein EcfA1, found in Bacillus cereus (strain ATCC 10987 / NRS 248).